Reading from the N-terminus, the 342-residue chain is Heat-inducible transcription repressor HrcA (342 aa).

It belongs to the HrcA family.

Negative regulator of class I heat shock genes (grpE-dnaK-dnaJ and groELS operons). Prevents heat-shock induction of these operons. This chain is Heat-inducible transcription repressor HrcA, found in Corynebacterium efficiens (strain DSM 44549 / YS-314 / AJ 12310 / JCM 11189 / NBRC 100395).